We begin with the raw amino-acid sequence, 263 residues long: Type III pantothenate kinase (263 aa).

6–13 (DVGNTNIK) provides a ligand contact to ATP. 108 to 111 (GSDR) provides a ligand contact to substrate. D110 acts as the Proton acceptor in catalysis. D131 is a K(+) binding site. T134 serves as a coordination point for ATP. T187 is a substrate binding site.

This sequence belongs to the type III pantothenate kinase family. Homodimer. NH4(+) is required as a cofactor. Requires K(+) as cofactor.

The protein resides in the cytoplasm. The catalysed reaction is (R)-pantothenate + ATP = (R)-4'-phosphopantothenate + ADP + H(+). It functions in the pathway cofactor biosynthesis; coenzyme A biosynthesis; CoA from (R)-pantothenate: step 1/5. Functionally, catalyzes the phosphorylation of pantothenate (Pan), the first step in CoA biosynthesis. This is Type III pantothenate kinase from Anaplasma phagocytophilum (strain HZ).